The primary structure comprises 704 residues: Elongation factor G (704 aa).

The region spanning 8 to 290 (ARYRNIGISA…AVIDYLPSPV (283 aa)) is the tr-type G domain. GTP contacts are provided by residues 17–24 (AHIDAGKT), 88–92 (DTPGH), and 142–145 (NKMD). Residues K504 and K643 each carry the N6-acetyllysine modification.

This sequence belongs to the TRAFAC class translation factor GTPase superfamily. Classic translation factor GTPase family. EF-G/EF-2 subfamily.

Its subcellular location is the cytoplasm. In terms of biological role, catalyzes the GTP-dependent ribosomal translocation step during translation elongation. During this step, the ribosome changes from the pre-translocational (PRE) to the post-translocational (POST) state as the newly formed A-site-bound peptidyl-tRNA and P-site-bound deacylated tRNA move to the P and E sites, respectively. Catalyzes the coordinated movement of the two tRNA molecules, the mRNA and conformational changes in the ribosome. The protein is Elongation factor G of Escherichia coli O17:K52:H18 (strain UMN026 / ExPEC).